We begin with the raw amino-acid sequence, 404 residues long: uncharacterized protein (404 aa).

11 helical membrane passes run 9-29 (IYLI…PYLS), 36-56 (GFGE…FIGL), 76-96 (LVVK…LLFC), 103-123 (IMFY…QLSI), 135-155 (FIQV…LEFY), 162-182 (KRIL…YLIY), 199-219 (AFFY…SFFI), 236-256 (LGLY…ILAI), 288-308 (IVPI…LFFL), 319-339 (IIVF…VNYL), and 366-386 (LIFT…LGIL).

Belongs to the polysaccharide synthase family. HI_0867/HI_1700 subfamily.

It localises to the cell membrane. This is an uncharacterized protein from Haemophilus influenzae (strain ATCC 51907 / DSM 11121 / KW20 / Rd).